We begin with the raw amino-acid sequence, 429 residues long: Probable M18 family aminopeptidase 2 (429 aa).

Positions 82, 156, and 401 each coordinate Zn(2+).

This sequence belongs to the peptidase M18 family. It depends on Zn(2+) as a cofactor.

The chain is Probable M18 family aminopeptidase 2 from Azotobacter vinelandii (strain DJ / ATCC BAA-1303).